Reading from the N-terminus, the 197-residue chain is Small ribosomal subunit protein uS4B (197 aa).

One can recognise an S4 RNA-binding domain in the interval 88 to 150 (SRLDNMVYRM…SRKTEMFVNN (63 aa)).

The protein belongs to the universal ribosomal protein uS4 family. Part of the 30S ribosomal subunit. Contacts protein S5. The interaction surface between S4 and S5 is involved in control of translational fidelity.

Its function is as follows. One of the primary rRNA binding proteins, it binds directly to 16S rRNA where it nucleates assembly of the body of the 30S subunit. In terms of biological role, with S5 and S12 plays an important role in translational accuracy. The sequence is that of Small ribosomal subunit protein uS4B from Clostridium perfringens (strain ATCC 13124 / DSM 756 / JCM 1290 / NCIMB 6125 / NCTC 8237 / Type A).